A 76-amino-acid polypeptide reads, in one-letter code: ATP synthase subunit c (76 aa).

The next 2 helical transmembrane spans lie at 13–33 (LSVI…GILF) and 55–75 (FIGL…ALII).

This sequence belongs to the ATPase C chain family. As to quaternary structure, F-type ATPases have 2 components, F(1) - the catalytic core - and F(0) - the membrane proton channel. F(1) has five subunits: alpha(3), beta(3), gamma(1), delta(1), epsilon(1). F(0) has three main subunits: a(1), b(2) and c(10-14). The alpha and beta chains form an alternating ring which encloses part of the gamma chain. F(1) is attached to F(0) by a central stalk formed by the gamma and epsilon chains, while a peripheral stalk is formed by the delta and b chains.

Its subcellular location is the cell membrane. F(1)F(0) ATP synthase produces ATP from ADP in the presence of a proton or sodium gradient. F-type ATPases consist of two structural domains, F(1) containing the extramembraneous catalytic core and F(0) containing the membrane proton channel, linked together by a central stalk and a peripheral stalk. During catalysis, ATP synthesis in the catalytic domain of F(1) is coupled via a rotary mechanism of the central stalk subunits to proton translocation. Its function is as follows. Key component of the F(0) channel; it plays a direct role in translocation across the membrane. A homomeric c-ring of between 10-14 subunits forms the central stalk rotor element with the F(1) delta and epsilon subunits. This Bifidobacterium longum subsp. infantis (strain ATCC 15697 / DSM 20088 / JCM 1222 / NCTC 11817 / S12) protein is ATP synthase subunit c.